We begin with the raw amino-acid sequence, 338 residues long: L-serine dehydratase (338 aa).

Position 39 is an N6-(pyridoxal phosphate)lysine (K39).

The protein belongs to the serine/threonine dehydratase family. Pyridoxal 5'-phosphate is required as a cofactor.

It is found in the cytoplasm. It carries out the reaction L-serine = pyruvate + NH4(+). It functions in the pathway carbohydrate biosynthesis; gluconeogenesis. In Saccharomyces cerevisiae (Baker's yeast), this protein is L-serine dehydratase (SDL1).